The following is an 894-amino-acid chain: DNA mismatch repair protein MutS (894 aa).

Residue 632-639 (GPNMGGKS) coordinates ATP.

The protein belongs to the DNA mismatch repair MutS family.

This protein is involved in the repair of mismatches in DNA. It is possible that it carries out the mismatch recognition step. This protein has a weak ATPase activity. In Paraburkholderia xenovorans (strain LB400), this protein is DNA mismatch repair protein MutS.